The primary structure comprises 357 residues: Trans-acting factor B (357 aa).

The disordered stretch occupies residues 226-257; the sequence is DDNDLEEEERNASGEQTTTAREESEALDTTSN.

Plasmid partition require REP1, REP2, and a cis-acting DNA sequence (known as STB). REP1 may act by intercalating in the yeast nuclear matrix and binding STB either directly or via REP2. In Zygosaccharomyces bailii, this protein is Trans-acting factor B (B).